The chain runs to 173 residues: Crossover junction endodeoxyribonuclease RuvC (173 aa).

Active-site residues include Asp-8, Glu-67, and Asp-139. Mg(2+) is bound by residues Asp-8, Glu-67, and Asp-139.

It belongs to the RuvC family. As to quaternary structure, homodimer which binds Holliday junction (HJ) DNA. The HJ becomes 2-fold symmetrical on binding to RuvC with unstacked arms; it has a different conformation from HJ DNA in complex with RuvA. In the full resolvosome a probable DNA-RuvA(4)-RuvB(12)-RuvC(2) complex forms which resolves the HJ. Requires Mg(2+) as cofactor.

It is found in the cytoplasm. It carries out the reaction Endonucleolytic cleavage at a junction such as a reciprocal single-stranded crossover between two homologous DNA duplexes (Holliday junction).. Its function is as follows. The RuvA-RuvB-RuvC complex processes Holliday junction (HJ) DNA during genetic recombination and DNA repair. Endonuclease that resolves HJ intermediates. Cleaves cruciform DNA by making single-stranded nicks across the HJ at symmetrical positions within the homologous arms, yielding a 5'-phosphate and a 3'-hydroxyl group; requires a central core of homology in the junction. The consensus cleavage sequence is 5'-(A/T)TT(C/G)-3'. Cleavage occurs on the 3'-side of the TT dinucleotide at the point of strand exchange. HJ branch migration catalyzed by RuvA-RuvB allows RuvC to scan DNA until it finds its consensus sequence, where it cleaves and resolves the cruciform DNA. In Yersinia enterocolitica serotype O:8 / biotype 1B (strain NCTC 13174 / 8081), this protein is Crossover junction endodeoxyribonuclease RuvC.